A 106-amino-acid chain; its full sequence is Small ribosomal subunit protein uS10 (106 aa).

It belongs to the universal ribosomal protein uS10 family. Part of the 30S ribosomal subunit.

Its function is as follows. Involved in the binding of tRNA to the ribosomes. In Synechococcus sp. (strain CC9902), this protein is Small ribosomal subunit protein uS10.